Reading from the N-terminus, the 32-residue chain is Kappa-conotoxin SrXIA (32 aa).

Cystine bridges form between Cys-1/Cys-15, Cys-8/Cys-20, Cys-14/Cys-24, and Cys-19/Cys-28. Glu-9 and Glu-10 each carry 4-carboxyglutamate. Pro-32 is modified (proline amide).

The protein belongs to the conotoxin I2 superfamily. As to expression, expressed by the venom duct.

The protein resides in the secreted. Kappa-conotoxins bind and inhibit voltage-gated potassium channels. This toxin inhibits Kv1.2/KCNA2 and Kv1.6/KCNA6. Produces stiffening of body, limbs and tail when injected intracranially into mice. This is Kappa-conotoxin SrXIA from Conus spurius (Alphabet cone).